A 223-amino-acid chain; its full sequence is 7-cyano-7-deazaguanine synthase (223 aa).

Residue 8–18 participates in ATP binding; sequence MSGGMDSTLCA. The Zn(2+) site is built by Cys-187, Cys-195, Cys-198, and Cys-201.

It belongs to the QueC family. It depends on Zn(2+) as a cofactor.

It catalyses the reaction 7-carboxy-7-deazaguanine + NH4(+) + ATP = 7-cyano-7-deazaguanine + ADP + phosphate + H2O + H(+). Its pathway is purine metabolism; 7-cyano-7-deazaguanine biosynthesis. Catalyzes the ATP-dependent conversion of 7-carboxy-7-deazaguanine (CDG) to 7-cyano-7-deazaguanine (preQ(0)). This Campylobacter curvus (strain 525.92) protein is 7-cyano-7-deazaguanine synthase.